Reading from the N-terminus, the 308-residue chain is N-acetyl-gamma-glutamyl-phosphate reductase (308 aa).

C116 is a catalytic residue.

The protein belongs to the NAGSA dehydrogenase family. Type 2 subfamily.

Its subcellular location is the cytoplasm. The catalysed reaction is N-acetyl-L-glutamate 5-semialdehyde + phosphate + NADP(+) = N-acetyl-L-glutamyl 5-phosphate + NADPH + H(+). Its pathway is amino-acid biosynthesis; L-arginine biosynthesis; N(2)-acetyl-L-ornithine from L-glutamate: step 3/4. Its function is as follows. Catalyzes the NADPH-dependent reduction of N-acetyl-5-glutamyl phosphate to yield N-acetyl-L-glutamate 5-semialdehyde. The sequence is that of N-acetyl-gamma-glutamyl-phosphate reductase from Mesorhizobium japonicum (strain LMG 29417 / CECT 9101 / MAFF 303099) (Mesorhizobium loti (strain MAFF 303099)).